Consider the following 48-residue polypeptide: Small, acid-soluble spore protein P (48 aa).

A compositionally biased stretch (basic and acidic residues) spans 1–12 (MTNKNDSKDMRK). Positions 1–48 (MTNKNDSKDMRKNVSKGDNPGQPEPLDGSKKVKNRNHTRQKHNTSHDM) are disordered. Basic residues predominate over residues 31–48 (KVKNRNHTRQKHNTSHDM).

This sequence belongs to the SspP family.

The protein resides in the spore core. This Geobacillus thermodenitrificans (strain NG80-2) protein is Small, acid-soluble spore protein P.